Reading from the N-terminus, the 399-residue chain is Tryptophan synthase beta chain (399 aa).

An N6-(pyridoxal phosphate)lysine modification is found at lysine 92.

The protein belongs to the TrpB family. As to quaternary structure, tetramer of two alpha and two beta chains. Pyridoxal 5'-phosphate is required as a cofactor.

The enzyme catalyses (1S,2R)-1-C-(indol-3-yl)glycerol 3-phosphate + L-serine = D-glyceraldehyde 3-phosphate + L-tryptophan + H2O. Its pathway is amino-acid biosynthesis; L-tryptophan biosynthesis; L-tryptophan from chorismate: step 5/5. The beta subunit is responsible for the synthesis of L-tryptophan from indole and L-serine. This Exiguobacterium sibiricum (strain DSM 17290 / CCUG 55495 / CIP 109462 / JCM 13490 / 255-15) protein is Tryptophan synthase beta chain.